The sequence spans 596 residues: MGIQTPNGFNLDNSGKRIVVDPVTRIEGHMRVEVNVDADNVIRNAVSTGTMWRGIEVILKNRDPRDAWAFTERICGVCTGTHALTSVRAVENALGITIPENANSIRNLMQLALQVHDHVVHFYHLHALDWVDVVSALSADPRATSTLAQSISNWPLSSPGYFKDLQTRLKKFVESGQLGPFKNGYWGSKAYKLPPEANLMAVAHYLEALDFQKEIVKIHTIFGGKNPHPNWLVGGVPCPINVDGTGAVGAINMERLNLISSIIDRLIEFNEMVYLPDVAAIGSFYKDWLYGGGLSGQSVLAYGDVPEHANDYSAKSLKLPRGAIINGNLSEVFPVDHANPDEIQEFVVHSWYKYPDETKGLHPWDGVTEPNYVLGPNAKGTKTAIEQLDEGGKYSWIKAPRWKGHAMEVGPLARWVVGYAQNKSEFKDPVDKFLRDLNLPTSALFSTLGRTAARALESVWAGRQMRYFQDKLVANIKAGDSSTANVDKWKPESWPKEAKGVGFTEAPRGALAHWIKIKDTKIDNYQCVVPTTWNGSPRDPKGNIGAFEASLMNTPMVNPEQPLEILRTIHSFDPCLACSTHVMSPDGQELAKVKVR.

Residues Cys-75, Cys-78, Cys-575, and Cys-578 each contribute to the Ni(2+) site.

The protein belongs to the [NiFe]/[NiFeSe] hydrogenase large subunit family. Heterodimer of a large and a small subunit. It depends on Ni(2+) as a cofactor.

The protein resides in the cell membrane. It catalyses the reaction H2 + A = AH2. This enzyme recycles the H(2) produced by nitrogenase to increase the production of ATP and to protect nitrogenase against inhibition or damage by O(2) under carbon- or phosphate-limited conditions. The polypeptide is Uptake hydrogenase large subunit (hupB) (Bradyrhizobium diazoefficiens (strain JCM 10833 / BCRC 13528 / IAM 13628 / NBRC 14792 / USDA 110)).